The sequence spans 414 residues: Protein PHLOEM PROTEIN 2-LIKE A10 (414 aa).

2 helical membrane-spanning segments follow: residues 20–40 (WLIF…VYHL) and 379–399 (YVGA…LHII).

Its subcellular location is the membrane. This Arabidopsis thaliana (Mouse-ear cress) protein is Protein PHLOEM PROTEIN 2-LIKE A10 (PP2A10).